Reading from the N-terminus, the 396-residue chain is Protein NDRG1-A (396 aa).

The tract at residues 326 to 396 (RSRTGSAASS…NSPKSMEVSC (71 aa)) is disordered. The segment covering 327-340 (SRTGSAASSSSQDG) has biased composition (low complexity). 4 consecutive repeat copies span residues 340 to 349 (GNRSRSHTNE), 350 to 359 (GSRSRSHTGD), 360 to 369 (GNRSRAHTGD), and 370 to 379 (GNRSRSHTDT). The 4 X 10 AA tandem repeats of G-[NS]-R-S-R-[AS]-H-T-[DGN]-[DET] stretch occupies residues 340–379 (GNRSRSHTNEGSRSRSHTGDGNRSRAHTGDGNRSRSHTDT). The segment covering 346–377 (HTNEGSRSRSHTGDGNRSRAHTGDGNRSRSHT) has biased composition (basic and acidic residues). Residues 378–390 (DTNNINSDQNSPK) show a composition bias toward polar residues.

This sequence belongs to the NDRG family.

May be involved in pronephros development, after specification of the pronephros. The protein is Protein NDRG1-A (ndrg1-a) of Xenopus laevis (African clawed frog).